The sequence spans 432 residues: Argininosuccinate lyase (432 aa).

The protein belongs to the lyase 1 family. Argininosuccinate lyase subfamily.

The protein localises to the cytoplasm. The catalysed reaction is 2-(N(omega)-L-arginino)succinate = fumarate + L-arginine. The protein operates within amino-acid biosynthesis; L-arginine biosynthesis; L-arginine from L-ornithine and carbamoyl phosphate: step 3/3. In Xanthomonas axonopodis pv. citri (strain 306), this protein is Argininosuccinate lyase.